A 315-amino-acid polypeptide reads, in one-letter code: Putative protein phosphatase 2C 24 (315 aa).

One can recognise a PPM-type phosphatase domain in the interval 71 to 314; the sequence is ALRMEAASCF…DDITVVVAYI (244 aa). Mn(2+) is bound by residues aspartate 102, glycine 103, aspartate 238, and aspartate 305.

This sequence belongs to the PP2C family. The cofactor is Mg(2+). Requires Mn(2+) as cofactor.

It carries out the reaction O-phospho-L-seryl-[protein] + H2O = L-seryl-[protein] + phosphate. The catalysed reaction is O-phospho-L-threonyl-[protein] + H2O = L-threonyl-[protein] + phosphate. The chain is Putative protein phosphatase 2C 24 from Oryza sativa subsp. japonica (Rice).